The chain runs to 128 residues: MALSKAEILDAIASLTVLELSELIKDLEEKFGVSAAAAAVAVAAPAAGGGDAGAAAAEKTEFDVILASAGDNKVNVIKAVRELTSLGLKEAKDLVDAAPKAIKEGVSKADAEAAAKKLEEAGAKAEIK.

It belongs to the bacterial ribosomal protein bL12 family. In terms of assembly, homodimer. Part of the ribosomal stalk of the 50S ribosomal subunit. Forms a multimeric L10(L12)X complex, where L10 forms an elongated spine to which 2 to 4 L12 dimers bind in a sequential fashion. Binds GTP-bound translation factors.

Functionally, forms part of the ribosomal stalk which helps the ribosome interact with GTP-bound translation factors. Is thus essential for accurate translation. The polypeptide is Large ribosomal subunit protein bL12 (Methylobacillus flagellatus (strain ATCC 51484 / DSM 6875 / VKM B-1610 / KT)).